A 170-amino-acid polypeptide reads, in one-letter code: Acetyl-CoA decarbonylase/synthase complex subunit epsilon 1 (170 aa).

Belongs to the CdhB family. In terms of assembly, heterotetramer of two alpha and two epsilon subunits. The ACDS complex is made up of alpha, epsilon, beta, gamma and delta subunits with a probable stoichiometry of (alpha(2)epsilon(2))(4)-beta(8)-(gamma(1)delta(1))(8).

Its pathway is one-carbon metabolism; methanogenesis from acetate. Its function is as follows. Part of a complex that catalyzes the reversible cleavage of acetyl-CoA, allowing growth on acetate as sole source of carbon and energy. The alpha-epsilon subcomponent functions as a carbon monoxide dehydrogenase. The precise role of the epsilon subunit is unclear; it may have a stabilizing role within the alpha(2)epsilon(2) component and/or be involved in electron transfer to FAD during a potential FAD-mediated CO oxidation. The chain is Acetyl-CoA decarbonylase/synthase complex subunit epsilon 1 from Methanosarcina barkeri (strain Fusaro / DSM 804).